The following is a 200-amino-acid chain: Dephospho-CoA kinase (200 aa).

A DPCK domain is found at Val4–Gly200. ATP is bound at residue Ala12–Thr17.

The protein belongs to the CoaE family.

It localises to the cytoplasm. It catalyses the reaction 3'-dephospho-CoA + ATP = ADP + CoA + H(+). It participates in cofactor biosynthesis; coenzyme A biosynthesis; CoA from (R)-pantothenate: step 5/5. Its function is as follows. Catalyzes the phosphorylation of the 3'-hydroxyl group of dephosphocoenzyme A to form coenzyme A. This chain is Dephospho-CoA kinase, found in Lactobacillus acidophilus (strain ATCC 700396 / NCK56 / N2 / NCFM).